A 283-amino-acid chain; its full sequence is Pseudokinase OPG198 (283 aa).

2 residues coordinate ATP: Met-1 and Lys-30. In terms of domain architecture, Protein kinase spans 1 to 283 (MESFKYCFDN…DRLRRLFIQD (283 aa)).

It belongs to the protein kinase superfamily. Ser/Thr protein kinase family. Poxviruses subfamily. In terms of assembly, interacts with B1/VPK1. Interacts with host VRK1. Interacts with host VRK2.

Its subcellular location is the host nucleus. Its activity is regulated as follows. Both catalytically active kinases B1/VPK1 and host VRK2 repress B12 inhibitory activity in a B1/VPK1 deletion mutant strain. In terms of biological role, pseudokinase that plays a role in viral DNA replication repression by activating the antiviral protein BANF1 and inhibiting the activity of host VRK1, a cellular modulator of BANF1. The protein is Pseudokinase OPG198 (OPG198) of Homo sapiens (Human).